The following is a 128-amino-acid chain: Large ribosomal subunit protein bL19 (128 aa).

Belongs to the bacterial ribosomal protein bL19 family.

Functionally, this protein is located at the 30S-50S ribosomal subunit interface and may play a role in the structure and function of the aminoacyl-tRNA binding site. This chain is Large ribosomal subunit protein bL19, found in Aromatoleum aromaticum (strain DSM 19018 / LMG 30748 / EbN1) (Azoarcus sp. (strain EbN1)).